An 87-amino-acid polypeptide reads, in one-letter code: Acylphosphatase (87 aa).

Residues 2 to 87 (RLTALVSGTV…ATGLRDFHVY (86 aa)) form the Acylphosphatase-like domain. Catalysis depends on residues Arg-17 and Asn-35.

The protein belongs to the acylphosphatase family.

It carries out the reaction an acyl phosphate + H2O = a carboxylate + phosphate + H(+). The sequence is that of Acylphosphatase (acyP) from Deinococcus geothermalis (strain DSM 11300 / CIP 105573 / AG-3a).